The sequence spans 463 residues: Calcitonin gene-related peptide type 1 receptor (463 aa).

An N-terminal signal peptide occupies residues 1–22; it reads MDKKHILCFLVLLPLNMALISA. The Extracellular segment spans residues 23-138; sequence ESEEGVNQTD…STHEKVKTAL (116 aa). N-linked (GlcNAc...) asparagine glycosylation is found at Asn-29, Asn-65, Asn-117, Asn-122, Asn-127, and Asn-128. Disulfide bonds link Cys-47–Cys-73, Cys-64–Cys-104, and Cys-87–Cys-126. A helical transmembrane segment spans residues 139–163; sequence NLFYLTIIGHGLSIASLIISLIIFF. Residues 164 to 174 are Cytoplasmic-facing; that stretch reads YFKSLSCQRIT. The helical transmembrane segment at 175-197 threads the bilayer; it reads LHKNLFFSFICNSIVTIIHLTAV. Topologically, residues 198-208 are extracellular; it reads ANNQALVATNP. A helical membrane pass occupies residues 209–237; sequence VSCKVSQFIHLYLMGCNYFWMLCEGVYLH. Residues 238–251 lie on the Cytoplasmic side of the membrane; that stretch reads TLIVVAVFAEKQHL. A helical membrane pass occupies residues 252–272; the sequence is MWYYFLGWGFPLLPACIHAIA. Over 273–288 the chain is Extracellular; it reads RSLYYNDNCWISSDTH. Residues 287–288 form a required for RAMP3 interaction region; it reads TH. The helical transmembrane segment at 289–313 threads the bilayer; sequence LLYIIHGPICAALLVNLFFLLNIVR. At 314 to 328 the chain is on the cytoplasmic side; that stretch reads VLITKLKVTHQVESN. Residues 329–350 form a helical membrane-spanning segment; it reads LYMKAVRATLILVPLLGIEFVL. Residues 351–365 lie on the Extracellular side of the membrane; it reads FPWRPEGKVAEEVYD. Residues 366–386 form a helical membrane-spanning segment; that stretch reads YVMHILMHFQGLLVATIFCFF. Residues 387-463 are Cytoplasmic-facing; the sequence is NGEVQAILRR…KSENMYDLVM (77 aa). A phosphoserine mark is found at Ser-419 and Ser-444.

The protein belongs to the G-protein coupled receptor 2 family. Heterodimer of CALCRL and RAMP1; the receptor complex functions as CGRP receptor. Heterodimer of CALCRL and RAMP2 or CALCRL and RAMP3; the complexes function as adrenomedullin receptor. In terms of tissue distribution, expressed predominantly in the lung, thymus, heart and brain.

The protein localises to the cell membrane. Functionally, g protein-coupled receptor which specificity is determined by its interaction with receptor-activity-modifying proteins (RAMPs). Together with RAMP1, form the receptor complex for calcitonin-gene-related peptides CALCA/CGRP1 and CALCB/CGRP2. Together with RAMP2 or RAMP3, function as receptor complexes for adrenomedullin (ADM and ADM2). Ligand binding causes a conformation change that triggers signaling via guanine nucleotide-binding proteins (G proteins) and modulates the activity of downstream effectors. Activates cAMP-dependent pathway. The chain is Calcitonin gene-related peptide type 1 receptor from Mus musculus (Mouse).